Consider the following 258-residue polypeptide: Heat-labile enterotoxin A chain (258 aa).

The N-terminal stretch at 1 to 18 is a signal peptide; it reads MKNITFIFFILLASPLYA. 25-39 is a binding site for NAD(+); that stretch reads RADSRPPDEIKRSGG. E128 is an active-site residue. C205 and C217 are disulfide-bonded.

The protein belongs to the enterotoxin A family. Heterohexamer of one A chain and of five B chains.

Its function is as follows. The biological activity of the toxin is produced by the A chain, which activates intracellular adenyl cyclase. This Escherichia coli O78:H11 (strain H10407 / ETEC) protein is Heat-labile enterotoxin A chain (eltA).